The chain runs to 268 residues: NAC transcription factor 29 (268 aa).

The NAC domain occupies 9–161 (LPPGFRFHPT…EWVLCRIYKK (153 aa)). Residues 106–167 (VGVKKALVFY…IYKKRGASKL (62 aa)) mediate DNA binding.

Expressed in senescing leaves, petals and sepals.

It is found in the nucleus. Transcription activator that binds to, and transactivates the promoter of the abscisic aldehyde oxidase AAO3. Promotes chlorophyll degradation in leaves by enhancing transcription of AAO3, which leads to increased levels of the senescence-inducing hormone abscisic acid (ABA). Involved in the control of dehydration in senescing leaves. Binds to the DNA sequence 5'-CACGTAAGT-3' of SAG113 promoter. SAG113 acts as a negative regulator of ABA signaling for stomatal closure in leaves, and controls water loss during leaf senescence. Transcription factor of the NAC family involved in senescence. May function in the transition between active cell division and cell expansion. Required for normal seed development and morphology. This is NAC transcription factor 29 (NAC029) from Arabidopsis thaliana (Mouse-ear cress).